The following is a 101-amino-acid chain: Large ribosomal subunit protein uL24 (101 aa).

The protein belongs to the universal ribosomal protein uL24 family. Part of the 50S ribosomal subunit.

Its function is as follows. One of two assembly initiator proteins, it binds directly to the 5'-end of the 23S rRNA, where it nucleates assembly of the 50S subunit. In terms of biological role, one of the proteins that surrounds the polypeptide exit tunnel on the outside of the subunit. The sequence is that of Large ribosomal subunit protein uL24 from Streptococcus gordonii (strain Challis / ATCC 35105 / BCRC 15272 / CH1 / DL1 / V288).